The following is an 839-amino-acid chain: Probable beta-glucosidase I (839 aa).

N-linked (GlcNAc...) asparagine glycosylation is present at Asn197. The active site involves Asp225. Residues 395 to 555 form the PA14 domain; it reads DGKTGFSFKV…GQEELISNAV (161 aa). A glycan (N-linked (GlcNAc...) asparagine) is linked at Asn620.

It belongs to the glycosyl hydrolase 3 family.

The protein localises to the secreted. It carries out the reaction Hydrolysis of terminal, non-reducing beta-D-glucosyl residues with release of beta-D-glucose.. It functions in the pathway glycan metabolism; cellulose degradation. Functionally, beta-glucosidases are one of a number of cellulolytic enzymes involved in the degradation of cellulosic biomass. Catalyzes the last step releasing glucose from the inhibitory cellobiose. The protein is Probable beta-glucosidase I (bglI) of Aspergillus oryzae (strain ATCC 42149 / RIB 40) (Yellow koji mold).